A 458-amino-acid polypeptide reads, in one-letter code: MKSNFSKFKDFIKYKKVAVVGIGVSNRPLIKFLVKLGAKVTAFDKKHREKLGSISLELEEIGVDLVLGENYLDKLDGYDVIFKTPSMRIDRPEFVKAKESGAYITSEMEEFIKYCPAKVFGITGSDGKTTTTTLVYEMLKKEGYRTWVGGNIGTPLFANIEEMKEDHMVVLELSSFQLMTMDVSPEISLITNLSPNHLDVHKDFEEYVWAKKNIFKYQSSNNLLVLNKDDDLTNEMENEALGDVLKFSLVEKVYNGACLSNNKLTIQGKEVCDSKDINLKGRHNIANLLAAFCMVNKYVSIDSMKYVATNFSGVEHRCEFIREVNGVKYYNDSIASSPSRTLAGLNSFEKPVILIAGGYDKKIPFEPLAEGGYDKIKILILMGDTKNKIKSAFEKVISHKKCEMEIVIVNSMEEAVKVADNIAEKGDIITLSPACASFDMYPNFEIRGNEFKNIVNRL.

ATP is bound at residue 124 to 130; sequence GSDGKTT.

It belongs to the MurCDEF family.

Its subcellular location is the cytoplasm. It catalyses the reaction UDP-N-acetyl-alpha-D-muramoyl-L-alanine + D-glutamate + ATP = UDP-N-acetyl-alpha-D-muramoyl-L-alanyl-D-glutamate + ADP + phosphate + H(+). Its pathway is cell wall biogenesis; peptidoglycan biosynthesis. Its function is as follows. Cell wall formation. Catalyzes the addition of glutamate to the nucleotide precursor UDP-N-acetylmuramoyl-L-alanine (UMA). The chain is UDP-N-acetylmuramoylalanine--D-glutamate ligase from Clostridium botulinum (strain Langeland / NCTC 10281 / Type F).